The following is a 341-amino-acid chain: Fructose-1,6-bisphosphatase, cytosolic (341 aa).

The Mg(2+) site is built by Glu100, Asp121, Leu123, and Asp124. Substrate is bound by residues 124–127 (DGSS), Asn215, Tyr247, Tyr267, and Lys277. Position 283 (Glu283) interacts with Mg(2+).

The protein belongs to the FBPase class 1 family. Requires Mg(2+) as cofactor.

The protein localises to the cytoplasm. It catalyses the reaction beta-D-fructose 1,6-bisphosphate + H2O = beta-D-fructose 6-phosphate + phosphate. In Musa acuminata (Banana), this protein is Fructose-1,6-bisphosphatase, cytosolic (FBPban1).